The sequence spans 366 residues: MKGGSLSFLFVLLIATITSVICFSDGMLPNGDFELGPKPSDMKGTQVINKKAIPSWELSGFVEYIKSGQKQGDMLLVVPAGKFAIRLGNEASIKQRLNVTKGMYYSLTFSAARTCAQDERLNISVAPDSGVIPIQTVYSSSGWDLYAWAFQAESNVAEIVIHNPGEEEDPACGPLIDGVAIKALYPPRPTNKNILKNGGFEEGPYVLPNATTGVLVPPFIEDDHSPLPAWMVESLKAIKYVDVEHFSVPQGRRAVELVAGKESAIAQVARTVVGKTYVLSFAVGDANNACQGSMVVEAFAGKDTLKVPYESRGKGGFKRASLRFVAVSTRTRVMFYSTFYSMRSDDFSSLCGPVIDDVKLLSARKP.

The first 22 residues, Met-1–Cys-22, serve as a signal peptide directing secretion. N-linked (GlcNAc...) asparagine glycosylation is found at Asn-98, Asn-122, and Asn-209.

In terms of assembly, interacts with PME3.

It is found in the secreted. The protein resides in the cell wall. Functionally, together with BIIDXI, acts as a positive regulator of PME3 activity during several developmental processes, including seed germination and endosperm (testa) rupture at the micropyle, probably by modulating the pectin status in cell walls. The protein is BIIDXI-like protein At5g11420 of Arabidopsis thaliana (Mouse-ear cress).